The primary structure comprises 60 residues: UPF0434 protein ECA2555 (60 aa).

This sequence belongs to the UPF0434 family.

In Pectobacterium atrosepticum (strain SCRI 1043 / ATCC BAA-672) (Erwinia carotovora subsp. atroseptica), this protein is UPF0434 protein ECA2555.